Here is a 963-residue protein sequence, read N- to C-terminus: Protein bicaudal C homolog 1-A (963 aa).

The disordered stretch occupies residues Met1–Arg48. Polar residues predominate over residues Met12–Glu22. The span at Asp35 to Arg48 shows a compositional bias: basic and acidic residues. 2 KH domains span residues Arg128–Ile195 and Pro280–Leu344. Positions Glu592 to Ser601 are enriched in polar residues. Disordered stretches follow at residues Glu592–Glu613, Glu668–Ser713, and Leu767–Ala834. 2 stretches are compositionally biased toward basic and acidic residues: residues Ser602–Pro612 and Val683–Glu696. The segment covering Glu784–Leu797 has biased composition (low complexity). Residues Ile812 to Gly824 are compositionally biased toward polar residues. Residues Phe862 to Asn925 form the SAM domain.

It belongs to the BicC family.

Putative RNA-binding protein. May be involved in regulating gene expression during embryonic development. Seems to be involved in endoderm formation. Ectopic expression results in endoderm formation in the absence of mesoderm induction. In Xenopus laevis (African clawed frog), this protein is Protein bicaudal C homolog 1-A (bicc1-a).